Reading from the N-terminus, the 203-residue chain is Glycerol-3-phosphate acyltransferase (203 aa).

4 consecutive transmembrane segments (helical) span residues 4–24 (LALIMTMAAYLLGSISSAVLI), 68–88 (IPVWGGYFLGIDPIILGVIAI), 117–137 (PIGLDLTGLVMLTWLSVAVLF), and 155–175 (TWMFKPQYTLPVAMLCCLIVF).

Belongs to the PlsY family. In terms of assembly, probably interacts with PlsX.

The protein resides in the cell inner membrane. The catalysed reaction is an acyl phosphate + sn-glycerol 3-phosphate = a 1-acyl-sn-glycero-3-phosphate + phosphate. Its pathway is lipid metabolism; phospholipid metabolism. Functionally, catalyzes the transfer of an acyl group from acyl-phosphate (acyl-PO(4)) to glycerol-3-phosphate (G3P) to form lysophosphatidic acid (LPA). This enzyme utilizes acyl-phosphate as fatty acyl donor, but not acyl-CoA or acyl-ACP. The sequence is that of Glycerol-3-phosphate acyltransferase from Vibrio campbellii (strain ATCC BAA-1116).